Consider the following 415-residue polypeptide: Serine--tRNA ligase (415 aa).

Residue 230-232 (TAE) coordinates L-serine. Residue 261 to 263 (RKE) participates in ATP binding. Glu284 serves as a coordination point for L-serine. 348–351 (EISS) is an ATP binding site. Ser382 is an L-serine binding site.

This sequence belongs to the class-II aminoacyl-tRNA synthetase family. Type-1 seryl-tRNA synthetase subfamily. As to quaternary structure, homodimer. The tRNA molecule binds across the dimer.

It is found in the cytoplasm. It carries out the reaction tRNA(Ser) + L-serine + ATP = L-seryl-tRNA(Ser) + AMP + diphosphate + H(+). It catalyses the reaction tRNA(Sec) + L-serine + ATP = L-seryl-tRNA(Sec) + AMP + diphosphate + H(+). The protein operates within aminoacyl-tRNA biosynthesis; selenocysteinyl-tRNA(Sec) biosynthesis; L-seryl-tRNA(Sec) from L-serine and tRNA(Sec): step 1/1. Functionally, catalyzes the attachment of serine to tRNA(Ser). Is also able to aminoacylate tRNA(Sec) with serine, to form the misacylated tRNA L-seryl-tRNA(Sec), which will be further converted into selenocysteinyl-tRNA(Sec). This chain is Serine--tRNA ligase, found in Sulfurimonas denitrificans (strain ATCC 33889 / DSM 1251) (Thiomicrospira denitrificans (strain ATCC 33889 / DSM 1251)).